The sequence spans 206 residues: Large ribosomal subunit protein uL4 (206 aa).

Belongs to the universal ribosomal protein uL4 family. As to quaternary structure, part of the 50S ribosomal subunit.

In terms of biological role, one of the primary rRNA binding proteins, this protein initially binds near the 5'-end of the 23S rRNA. It is important during the early stages of 50S assembly. It makes multiple contacts with different domains of the 23S rRNA in the assembled 50S subunit and ribosome. Functionally, forms part of the polypeptide exit tunnel. The sequence is that of Large ribosomal subunit protein uL4 from Bradyrhizobium sp. (strain BTAi1 / ATCC BAA-1182).